A 418-amino-acid polypeptide reads, in one-letter code: Alpha-1-antitrypsin (418 aa).

The N-terminal stretch at 1 to 24 is a signal peptide; it reads MPSSVSWGILLLAGLCCLVPVSLA. Phosphoserine is present on serine 38. Asparagine 70, asparagine 107, and asparagine 271 each carry an N-linked (GlcNAc...) asparagine glycan. Positions 373-392 are RCL; the sequence is GAMFLEAIPMSIPPEVKFNK. The residue at position 383 (serine 383) is a Phosphoserine.

Belongs to the serpin family. In terms of assembly, interacts with CELA2A. Interacts with ERGIC3 and LMAN1/ERGIC53. Interacts with PRSS1/Trypsin. As to expression, plasma.

The protein localises to the secreted. Functionally, inhibitor of serine proteases. Its primary target is elastase, but it also has a moderate affinity for plasmin and thrombin. Inhibits trypsin, chymotrypsin and plasminogen activator. The polypeptide is Alpha-1-antitrypsin (SERPINA1) (Pongo abelii (Sumatran orangutan)).